A 212-amino-acid chain; its full sequence is Peroxiredoxin 2 (212 aa).

Positions 7-162 constitute a Thioredoxin domain; sequence PLIGEKFPEM…ILRSIRALQL (156 aa). Catalysis depends on C49, which acts as the Cysteine sulfenic acid (-SOH) intermediate. R125 is a binding site for substrate.

This sequence belongs to the peroxiredoxin family. Prx6 subfamily. In terms of assembly, homodecamer. Pentamer of dimers that assemble into a ring structure.

It is found in the cytoplasm. It carries out the reaction a hydroperoxide + [thioredoxin]-dithiol = an alcohol + [thioredoxin]-disulfide + H2O. Functionally, thiol-specific peroxidase that catalyzes the reduction of hydrogen peroxide and organic hydroperoxides to water and alcohols, respectively. Plays a role in cell protection against oxidative stress by detoxifying peroxides. The chain is Peroxiredoxin 2 from Sulfurisphaera tokodaii (strain DSM 16993 / JCM 10545 / NBRC 100140 / 7) (Sulfolobus tokodaii).